Reading from the N-terminus, the 273-residue chain is Formamidopyrimidine-DNA glycosylase (273 aa).

Residue Pro2 is the Schiff-base intermediate with DNA of the active site. Glu3 serves as the catalytic Proton donor. Lys58 serves as the catalytic Proton donor; for beta-elimination activity. 2 residues coordinate DNA: His91 and Arg110. The FPG-type zinc finger occupies 238 to 272 (QVYGKTGQPCPRCASMIVKIKLGGRGTHLCPHCQK). The active-site Proton donor; for delta-elimination activity is the Arg262.

The protein belongs to the FPG family. In terms of assembly, monomer. Zn(2+) is required as a cofactor.

The catalysed reaction is Hydrolysis of DNA containing ring-opened 7-methylguanine residues, releasing 2,6-diamino-4-hydroxy-5-(N-methyl)formamidopyrimidine.. It catalyses the reaction 2'-deoxyribonucleotide-(2'-deoxyribose 5'-phosphate)-2'-deoxyribonucleotide-DNA = a 3'-end 2'-deoxyribonucleotide-(2,3-dehydro-2,3-deoxyribose 5'-phosphate)-DNA + a 5'-end 5'-phospho-2'-deoxyribonucleoside-DNA + H(+). Its function is as follows. Involved in base excision repair of DNA damaged by oxidation or by mutagenic agents. Acts as a DNA glycosylase that recognizes and removes damaged bases. Has a preference for oxidized purines, such as 7,8-dihydro-8-oxoguanine (8-oxoG). Has AP (apurinic/apyrimidinic) lyase activity and introduces nicks in the DNA strand. Cleaves the DNA backbone by beta-delta elimination to generate a single-strand break at the site of the removed base with both 3'- and 5'-phosphates. In Streptococcus thermophilus (strain CNRZ 1066), this protein is Formamidopyrimidine-DNA glycosylase.